The sequence spans 758 residues: General transcription and DNA repair factor IIH helicase subunit XPD (758 aa).

The region spanning 7 to 285 (DVTVYFPYDN…TDAGRLRAEY (279 aa)) is the Helicase ATP-binding domain. 42–49 (MPTGTGKT) contributes to the ATP binding site. [4Fe-4S] cluster contacts are provided by C116, C134, C155, and C190. The DEAH box signature appears at 234–238 (DEAHN).

This sequence belongs to the helicase family. RAD3/XPD subfamily. In terms of assembly, component of the 7-subunit TFIIH core complex composed of XPB, XPD, TFB1/GTF2H1, GTF2H2/P44, TFB4/GTF2H3, TFB2/GTF2H4 and TFB5/GTF2H5, which is active in NER. The core complex associates with the 3-subunit CDK-activating kinase (CAK) module composed of CYCH1/cyclin H1, CDKD and MAT1/At4g30820 to form the 10-subunit holoenzyme (holo-TFIIH) active in transcription. Interacts with GTF2H2/p44. [4Fe-4S] cluster serves as cofactor. Expressed at low levels in all tissues.

The protein localises to the nucleus. The enzyme catalyses Couples ATP hydrolysis with the unwinding of duplex DNA at the replication fork by translocating in the 5'-3' direction. This creates two antiparallel DNA single strands (ssDNA). The leading ssDNA polymer is the template for DNA polymerase III holoenzyme which synthesizes a continuous strand.. It carries out the reaction ATP + H2O = ADP + phosphate + H(+). In terms of biological role, ATP-dependent 5'-3' DNA helicase, component of the general transcription and DNA repair factor IIH (TFIIH) core complex, which is involved in general and transcription-coupled nucleotide excision repair (NER) of damaged DNA and, when complexed to CDK-activating kinase (CAK), involved in transcription by RNA polymerase II. In NER, TFIIH acts by opening DNA around the lesion to allow the excision of the damaged oligonucleotide and its replacement by a new DNA fragment. The ATP-dependent helicase activity of XPD is required for DNA opening. In transcription, TFIIH has an essential role in transcription initiation. When the pre-initiation complex (PIC) has been established, TFIIH is required for promoter opening and promoter escape. Phosphorylation of the C-terminal tail (CTD) of the largest subunit of RNA polymerase II by the kinase module CAK controls the initiation of transcription. XPD acts by forming a bridge between CAK and the core-TFIIH complex. Essential during plant growth. May negatively regulate a common response program mediated by UV damage and heat stress, that leads to tissue death and reduced chloroplast function. The sequence is that of General transcription and DNA repair factor IIH helicase subunit XPD from Arabidopsis thaliana (Mouse-ear cress).